The following is a 249-amino-acid chain: Phosphatidylglycerol--prolipoprotein diacylglyceryl transferase (249 aa).

The next 7 membrane-spanning stretches (helical) occupy residues 11-31 (LKIYGYGAMIALGILAAVILL), 49-69 (AIVGIIGGILGGKLLYIIVDI), 82-102 (LGNGFVIYGAIIGGAISVYLY), 116-136 (LVVPSVALAQGFGRIGCFLAG), 163-183 (LHPTQIYSSIFDFLLAFFLLW), 192-212 (GRVFSLYVIIYGVGRVIVEFL), and 223-243 (LSTSQFISLFTIIIGIFVFNI). Arginine 129 lines the a 1,2-diacyl-sn-glycero-3-phospho-(1'-sn-glycerol) pocket.

It belongs to the Lgt family.

The protein resides in the cell membrane. It carries out the reaction L-cysteinyl-[prolipoprotein] + a 1,2-diacyl-sn-glycero-3-phospho-(1'-sn-glycerol) = an S-1,2-diacyl-sn-glyceryl-L-cysteinyl-[prolipoprotein] + sn-glycerol 1-phosphate + H(+). It functions in the pathway protein modification; lipoprotein biosynthesis (diacylglyceryl transfer). Functionally, catalyzes the transfer of the diacylglyceryl group from phosphatidylglycerol to the sulfhydryl group of the N-terminal cysteine of a prolipoprotein, the first step in the formation of mature lipoproteins. This Clostridium tetani (strain Massachusetts / E88) protein is Phosphatidylglycerol--prolipoprotein diacylglyceryl transferase.